The chain runs to 476 residues: UDP-N-acetylmuramate--L-alanine ligase (476 aa).

An ATP-binding site is contributed by 121–127; that stretch reads GAHGKTT.

It belongs to the MurCDEF family.

The protein localises to the cytoplasm. The enzyme catalyses UDP-N-acetyl-alpha-D-muramate + L-alanine + ATP = UDP-N-acetyl-alpha-D-muramoyl-L-alanine + ADP + phosphate + H(+). It participates in cell wall biogenesis; peptidoglycan biosynthesis. Its function is as follows. Cell wall formation. This is UDP-N-acetylmuramate--L-alanine ligase from Clavibacter michiganensis subsp. michiganensis (strain NCPPB 382).